The chain runs to 171 residues: Photosystem I assembly protein Ycf3 (171 aa).

3 TPR repeats span residues 33 to 66, 70 to 103, and 118 to 151; these read AFSY…EEDP, SYIL…NSRL, and GTKS…APNN.

This sequence belongs to the Ycf3 family.

The protein resides in the plastid. Its subcellular location is the chloroplast thylakoid membrane. Its function is as follows. Essential for the assembly of the photosystem I (PSI) complex. May act as a chaperone-like factor to guide the assembly of the PSI subunits. In Emiliania huxleyi (Coccolithophore), this protein is Photosystem I assembly protein Ycf3.